We begin with the raw amino-acid sequence, 66 residues long: Sodium channel neurotoxin MeuNaTxalpha-7 (66 aa).

The LCN-type CS-alpha/beta domain maps to 2–64 (RDGYIADDKN…VPIKVSGKCN (63 aa)). 4 disulfides stabilise this stretch: Cys-12–Cys-63, Cys-16–Cys-36, Cys-22–Cys-46, and Cys-26–Cys-48. Asn-64 is modified (asparagine amide).

The protein belongs to the long (4 C-C) scorpion toxin superfamily. Sodium channel inhibitor family. Alpha subfamily. Expressed by the venom gland.

The protein resides in the secreted. Functionally, alpha toxins bind voltage-independently at site-3 of sodium channels (Nav) and inhibit the inactivation of the activated channels, thereby blocking neuronal transmission. In Mesobuthus eupeus (Lesser Asian scorpion), this protein is Sodium channel neurotoxin MeuNaTxalpha-7.